Reading from the N-terminus, the 140-residue chain is Putative pre-16S rRNA nuclease (140 aa).

Belongs to the YqgF nuclease family.

Its subcellular location is the cytoplasm. Functionally, could be a nuclease involved in processing of the 5'-end of pre-16S rRNA. The chain is Putative pre-16S rRNA nuclease from Endomicrobium trichonymphae.